The sequence spans 190 residues: Putative phosphatidylethanolamine-binding protein (190 aa).

It belongs to the phosphatidylethanolamine-binding protein family.

This chain is Putative phosphatidylethanolamine-binding protein, found in Plasmodium falciparum.